The sequence spans 219 residues: Orotate phosphoribosyltransferase (219 aa).

5-phospho-alpha-D-ribose 1-diphosphate is bound at residue lysine 26. Position 34–35 (34–35) interacts with orotate; the sequence is FF. 5-phospho-alpha-D-ribose 1-diphosphate-binding positions include 72 to 73, arginine 98, lysine 99, lysine 102, histidine 104, and 124 to 132; these read YK and DDVITAGTA. Residues threonine 128 and arginine 156 each coordinate orotate.

The protein belongs to the purine/pyrimidine phosphoribosyltransferase family. PyrE subfamily. As to quaternary structure, homodimer. Mg(2+) is required as a cofactor.

It catalyses the reaction orotidine 5'-phosphate + diphosphate = orotate + 5-phospho-alpha-D-ribose 1-diphosphate. Its pathway is pyrimidine metabolism; UMP biosynthesis via de novo pathway; UMP from orotate: step 1/2. In terms of biological role, catalyzes the transfer of a ribosyl phosphate group from 5-phosphoribose 1-diphosphate to orotate, leading to the formation of orotidine monophosphate (OMP). This is Orotate phosphoribosyltransferase from Xanthomonas euvesicatoria pv. vesicatoria (strain 85-10) (Xanthomonas campestris pv. vesicatoria).